We begin with the raw amino-acid sequence, 255 residues long: UPF0246 protein BVU_0413 (255 aa).

This sequence belongs to the UPF0246 family.

The sequence is that of UPF0246 protein BVU_0413 from Phocaeicola vulgatus (strain ATCC 8482 / DSM 1447 / JCM 5826 / CCUG 4940 / NBRC 14291 / NCTC 11154) (Bacteroides vulgatus).